The sequence spans 314 residues: Ketimine reductase mu-crystallin (314 aa).

R47 lines the 3,3',5-triiodo-L-thyronine pocket. NADPH contacts are provided by D82, H92, R119, A144, V146, Q147, N168, R169, T170, N173, T205, L206, V226, and A228. E257 lines the 3,3',5-triiodo-L-thyronine pocket. Position 292 (S292) interacts with NADPH.

This sequence belongs to the ornithine cyclodeaminase/mu-crystallin family. In terms of assembly, homodimer. Binds the thyroid hormone triiodothyronine (T3); T3 binding inhibits enzymatic activity. Expressed in neural tissues, muscle and kidney. Expressed in the inner ear.

The protein localises to the cytoplasm. It catalyses the reaction L-pipecolate + NADP(+) = Delta(1)-piperideine-2-carboxylate + NADPH + H(+). The enzyme catalyses L-pipecolate + NAD(+) = Delta(1)-piperideine-2-carboxylate + NADH + H(+). It carries out the reaction L-proline + NADP(+) = 1-pyrroline-2-carboxylate + NADPH + H(+). The catalysed reaction is L-proline + NAD(+) = 1-pyrroline-2-carboxylate + NADH + H(+). It catalyses the reaction (3R)-1,4-thiomorpholine-3-carboxylate + NAD(+) = 3,4-dehydrothiomorpholine-3-carboxylate + NADH + 2 H(+). The enzyme catalyses (3R)-1,4-thiomorpholine-3-carboxylate + NADP(+) = 3,4-dehydrothiomorpholine-3-carboxylate + NADPH + 2 H(+). It carries out the reaction (S)-cystathionine ketimine + NADH + 2 H(+) = (3R,5S)-2,3,5,6,7-pentahydro-1,4-thiazepine-3,5-dicarboxylate + NAD(+). The catalysed reaction is (S)-cystathionine ketimine + NADPH + 2 H(+) = (3R,5S)-2,3,5,6,7-pentahydro-1,4-thiazepine-3,5-dicarboxylate + NADP(+). It catalyses the reaction (R)-lanthionine ketimine + NADPH + 2 H(+) = (3R,5R)-1,4-thiomorpholine-3,5-dicarboxylate + NADP(+). The enzyme catalyses Delta(2)-thiazoline-2-carboxylate + NADPH + 2 H(+) = L-thiazolidine-2-carboxylate + NADP(+). Its activity is regulated as follows. Inhibited by thyroid hormones triiodothyronine (T3) and thyroxine (T4). Its function is as follows. Catalyzes the NAD(P)H-dependent reduction of imine double bonds of a number of cyclic ketimine substrates, including sulfur-containing cyclic ketimines. Under physiological conditions, it efficiently catalyzes delta(1)-piperideine-2-carboxylate (P2C) and delta(1)-pyrroline-2-carboxylate (Pyr2C) reduction, suggesting a central role in lysine and glutamate metabolism. Additional substrates are delta(2)-thiazoline-2-carboxylate (T2C), 3,4-dehydrothiomorpholine-3-carboxylate (AECK), and (R)-lanthionine ketimine (LK) that is reduced at very low rate compared to other substrates. Also catalyzes the NAD(P)H-dependent reduction of (S)-cystathionine ketimine (CysK). This is Ketimine reductase mu-crystallin from Homo sapiens (Human).